Consider the following 178-residue polypeptide: Bifunctional protein PyrR (178 aa).

Residues 99–111 carry the PRPP-binding motif; sequence VVLVDDVIFKGRT.

This sequence belongs to the purine/pyrimidine phosphoribosyltransferase family. PyrR subfamily.

The enzyme catalyses UMP + diphosphate = 5-phospho-alpha-D-ribose 1-diphosphate + uracil. Functionally, regulates the transcription of the pyrimidine nucleotide (pyr) operon in response to exogenous pyrimidines. Its function is as follows. Also displays a weak uracil phosphoribosyltransferase activity which is not physiologically significant. The chain is Bifunctional protein PyrR from Nostoc punctiforme (strain ATCC 29133 / PCC 73102).